The primary structure comprises 66 residues: Large ribosomal subunit protein bL31 (66 aa).

Residues Cys-16, Cys-18, Cys-36, and Cys-39 each contribute to the Zn(2+) site.

Belongs to the bacterial ribosomal protein bL31 family. Type A subfamily. In terms of assembly, part of the 50S ribosomal subunit. Zn(2+) is required as a cofactor.

Functionally, binds the 23S rRNA. This is Large ribosomal subunit protein bL31 from Campylobacter curvus (strain 525.92).